The primary structure comprises 824 residues: Frameshifted structural polyprotein (824 aa).

Residues 1 to 10 (MEFIPTQTFY) are compositionally biased toward polar residues. Residues 1-104 (MEFIPTQTFY…KKKKPGRRER (104 aa)) are disordered. Positions 22–44 (RPTIQVIRPRPRPQRQAGQLAQL) are enriched in low complexity. Positions 36–68 (RQAGQLAQLISAVNKLTMRAVPQQKPRKNRKNK) are host transcription inhibition. The segment covering 60–72 (KPRKNRKNKKQKQ) has biased composition (basic residues). The Nuclear localization signal signature appears at 61-99 (PRKNRKNKKQKQKQQAPQNNTNQKKQPPKKKPAQKKKKP). A compositionally biased stretch (low complexity) spans 73–85 (KQQAPQNNTNQKK). The tract at residues 84-114 (KKQPPKKKPAQKKKKPGRRERMCMKIENDCI) is binding to the viral RNA. The span at 86–101 (QPPKKKPAQKKKKPGR) shows a compositional bias: basic residues. Ribosome-binding stretches follow at residues 91-100 (KPAQKKKKPG) and 99-113 (PGRR…ENDC). The cysteines at positions 113 and 128 are disulfide-linked. Positions 113 to 261 (CIFEVKHEGK…KITPEGAEEW (149 aa)) constitute a Peptidase S3 domain. The Charge relay system role is filled by H139. The Nuclear export signal motif lies at 144 to 154 (IDNADLAKLAF). The active-site Charge relay system is the D161. A dimerization of the capsid protein region spans residues 183-193 (PEGYYNWHHGA). S213 serves as the catalytic Charge relay system. A dimerization of the capsid protein region spans residues 219–223 (DNKGR). A functions as an uncleaved signal peptide for the precursor of protein E3/E2 region spans residues 262–274 (SLAIPVMCLLANT). Over 262 to 692 (SLAIPVMCLL…YYYELYPTMT (431 aa)) the chain is Extracellular. 3 N-linked (GlcNAc...) asparagine; by host glycosylation sites follow: N273, N588, and N670. Residues 693–713 (VVVVSVASFILLSMVGMAVGM) traverse the membrane as a helical segment. At 714 to 748 (CMCARRRCITPYELTPGATVPFLLSLICCIRTAKA) the chain is on the cytoplasmic side. Residues C721, C741, and C742 are each lipidated (S-palmitoyl cysteine; by host). Positions 721-741 (CITPYELTPGATVPFLLSLIC) are transient transmembrane before p62-6K protein processing. Residues 749–763 (ATYQEAAVYLWNEQQ) lie on the Extracellular side of the membrane. A helical membrane pass occupies residues 764-784 (PLFWLQALIPLAALIVLCNCL). Residues 785–795 (RLLPCCCKTLA) lie on the Cytoplasmic side of the membrane.

This sequence belongs to the alphavirus frameshifted structural polyprotein family. As to quaternary structure, homodimer. Homomultimer. Interacts with host karyopherin KPNA4; this interaction allows the nuclear import of the viral capsid protein. Interacts with spike glycoprotein E2. Interacts with host IRAK1; the interaction leads to inhibition of IRAK1-dependent signaling. The precursor of protein E3/E2 and E1 form a heterodimer shortly after synthesis. In terms of assembly, processing of the precursor of protein E3/E2 into E2 and E3 results in a heterodimer of the spike glycoproteins E2 and E1. Spike at virion surface are constituted of three E2-E1 heterodimers. Interacts with 6K protein. Interacts with host MXRA8; this interaction mediates virus entry. Specific enzymatic cleavages in vivo yield mature proteins. Capsid protein is auto-cleaved during polyprotein translation, unmasking a signal peptide at the N-terminus of the precursor of E3/E2. The remaining polyprotein is then targeted to the host endoplasmic reticulum, where host signal peptidase cleaves it into pE2 and TF. pE2 is further processed to mature E3 and E2 by host furin in trans-Golgi vesicle. In terms of processing, palmitoylated via thioester bonds. These palmitoylations may induce disruption of the C-terminus transmembrane. This would result in the reorientation of E2 C-terminus from lumenal to cytoplasmic side. Post-translationally, palmitoylated via thioester bonds.

It localises to the virion. The protein localises to the host cytoplasm. It is found in the host cell membrane. The protein resides in the host nucleus. Its subcellular location is the virion membrane. It carries out the reaction Autocatalytic release of the core protein from the N-terminus of the togavirus structural polyprotein by hydrolysis of a -Trp-|-Ser- bond.. Forms an icosahedral capsid with a T=4 symmetry composed of 240 copies of the capsid protein surrounded by a lipid membrane through which penetrate 80 spikes composed of trimers of E1-E2 heterodimers. The capsid protein binds to the viral RNA genome at a site adjacent to a ribosome binding site for viral genome translation following genome release. Possesses a protease activity that results in its autocatalytic cleavage from the nascent structural protein. Following its self-cleavage, the capsid protein transiently associates with ribosomes, and within several minutes the protein binds to viral RNA and rapidly assembles into icosahedric core particles. The resulting nucleocapsid eventually associates with the cytoplasmic domain of the spike glycoprotein E2 at the cell membrane, leading to budding and formation of mature virions. In case of infection, new virions attach to target cells and after clathrin-mediated endocytosis their membrane fuses with the host endosomal membrane. This leads to the release of the nucleocapsid into the cytoplasm, followed by an uncoating event necessary for the genomic RNA to become accessible. The uncoating might be triggered by the interaction of capsid proteins with ribosomes. Binding of ribosomes would release the genomic RNA since the same region is genomic RNA-binding and ribosome-binding. Specifically inhibits interleukin-1 receptor-associated kinase 1/IRAK1-dependent signaling during viral entry, representing a means by which the alphaviruses may evade innate immune detection and activation prior to viral gene expression. Functionally, provides the signal sequence for the translocation of the precursor of protein E3/E2 to the host endoplasmic reticulum. Furin-cleaved E3 remains associated with spike glycoprotein E1 and mediates pH protection of the latter during the transport via the secretory pathway. After virion release from the host cell, the assembly protein E3 is gradually released in the extracellular space. In terms of biological role, plays a role in viral attachment to target host cell, by binding to the cell receptor. Synthesized as a p62 precursor which is processed by furin at the cell membrane just before virion budding, giving rise to E2-E1 heterodimer. The p62-E1 heterodimer is stable, whereas E2-E1 is unstable and dissociate at low pH. p62 is processed at the last step, presumably to avoid E1 fusion activation before its final export to cell surface. E2 C-terminus contains a transitory transmembrane that would be disrupted by palmitoylation, resulting in reorientation of the C-terminal tail from lumenal to cytoplasmic side. This step is critical since E2 C-terminus is involved in budding by interacting with capsid proteins. This release of E2 C-terminus in cytoplasm occurs lately in protein export, and precludes premature assembly of particles at the endoplasmic reticulum membrane. Its function is as follows. Plays a role in viral assembly and release. The sequence is that of Frameshifted structural polyprotein from Aedes aegypti (Yellowfever mosquito).